The chain runs to 127 residues: uncharacterized protein (127 aa).

Residues 84–103 form a helical membrane-spanning segment; the sequence is IALLSLFISLSIRITCFPFF.

It is found in the membrane. This is an uncharacterized protein from Saccharomyces cerevisiae (strain ATCC 204508 / S288c) (Baker's yeast).